A 148-amino-acid polypeptide reads, in one-letter code: Large ribosomal subunit protein bL9 (148 aa).

This sequence belongs to the bacterial ribosomal protein bL9 family.

Its function is as follows. Binds to the 23S rRNA. This Hahella chejuensis (strain KCTC 2396) protein is Large ribosomal subunit protein bL9.